We begin with the raw amino-acid sequence, 147 residues long: Hemoglobin subunit epsilon (147 aa).

Residues 3–147 (HFTAEEKVAI…VAIALGHKYH (145 aa)) form the Globin domain. Phosphoserine is present on residues Ser14 and Ser51. The heme b site is built by His64 and His93.

The protein belongs to the globin family. Heterotetramer of two alpha chains and two epsilon chains in early embryonic hemoglobin Gower-2; two zeta chains and two epsilon chains in early embryonic hemoglobin Gower-1. As to expression, red blood cells.

Its function is as follows. The epsilon chain is a beta-type chain of early mammalian embryonic hemoglobin. This Cebus kaapori (Ka'apor capuchin) protein is Hemoglobin subunit epsilon (HBE1).